A 242-amino-acid chain; its full sequence is Small ribosomal subunit protein uS2 (242 aa).

The protein belongs to the universal ribosomal protein uS2 family.

This is Small ribosomal subunit protein uS2 from Mannheimia succiniciproducens (strain KCTC 0769BP / MBEL55E).